Here is a 71-residue protein sequence, read N- to C-terminus: Cell division protein ZapB (71 aa).

Residues 5 to 67 adopt a coiled-coil conformation; it reads LEVLEQLESK…RALLGKMDQM (63 aa).

This sequence belongs to the ZapB family. Homodimer. The ends of the coiled-coil dimer bind to each other, forming polymers. Interacts with FtsZ.

Its subcellular location is the cytoplasm. Functionally, non-essential, abundant cell division factor that is required for proper Z-ring formation. It is recruited early to the divisome by direct interaction with FtsZ, stimulating Z-ring assembly and thereby promoting cell division earlier in the cell cycle. Its recruitment to the Z-ring requires functional FtsA or ZipA. The sequence is that of Cell division protein ZapB from Aeromonas hydrophila subsp. hydrophila (strain ATCC 7966 / DSM 30187 / BCRC 13018 / CCUG 14551 / JCM 1027 / KCTC 2358 / NCIMB 9240 / NCTC 8049).